Reading from the N-terminus, the 428-residue chain is MTEAMKITLSHEPADARWGEKALYSFTQDGIALHLTGKDDLGLIQRAGRKIDGQGLKHVELAGDGWDVEKSWAFWMGYRGPKGKRTVTWAPLDDAQQKELNNRLKVIDWVRDVINAPAEEMGPEHLAQRAVDLLADVGGERVSYRITKGEDLREQNYMGLHTVGRGSERPPVLLALDFNPTGDANAPVFACLVGKGITFDSGGYSIKQTAFMDSMKSDMGGAALVTGSLAFAITRGLNKRVKLILCCADNMISGNAFRLGDIIRYRNGKTVEVMNTDAEGRLVLADGLIDASAQKPALIIDAATLTGAAKTALGNDYHALFSFDDALANRLLQSAQAENEAFWRLPLAEFHRNQLPSNFAELNNTAGGAYPAGASTAAGFLSHFVENYQQGWLHIDCSATYRKAAVEQWAAGATGIGVRTLANLLTAE.

2 residues coordinate Mn(2+): lysine 195 and aspartate 200. The active site involves lysine 207. 3 residues coordinate Mn(2+): aspartate 218, aspartate 277, and glutamate 279. Arginine 281 is an active-site residue.

The protein belongs to the peptidase M17 family. Homohexamer. Mn(2+) serves as cofactor.

The protein resides in the cytoplasm. The catalysed reaction is Release of an N-terminal amino acid, Xaa, from a peptide or arylamide. Xaa is preferably Glu or Asp but may be other amino acids, including Leu, Met, His, Cys and Gln.. In terms of biological role, probably plays an important role in intracellular peptide degradation. The polypeptide is Peptidase B (Cronobacter sakazakii (strain ATCC BAA-894) (Enterobacter sakazakii)).